Reading from the N-terminus, the 263-residue chain is Endonuclease 8 (263 aa).

P2 functions as the Schiff-base intermediate with DNA in the catalytic mechanism. E3 (proton donor) is an active-site residue. Residue K53 is the Proton donor; for beta-elimination activity of the active site. DNA contacts are provided by Q70, R125, and N169. The segment at 229–263 (KVFHRDGEACERCGGIIEKTTLSSRPFYWCPHCQK) adopts an FPG-type zinc-finger fold. Catalysis depends on R253, which acts as the Proton donor; for delta-elimination activity.

It belongs to the FPG family. It depends on Zn(2+) as a cofactor.

The enzyme catalyses 2'-deoxyribonucleotide-(2'-deoxyribose 5'-phosphate)-2'-deoxyribonucleotide-DNA = a 3'-end 2'-deoxyribonucleotide-(2,3-dehydro-2,3-deoxyribose 5'-phosphate)-DNA + a 5'-end 5'-phospho-2'-deoxyribonucleoside-DNA + H(+). Its function is as follows. Involved in base excision repair of DNA damaged by oxidation or by mutagenic agents. Acts as a DNA glycosylase that recognizes and removes damaged bases. Has a preference for oxidized pyrimidines, such as thymine glycol, 5,6-dihydrouracil and 5,6-dihydrothymine. Has AP (apurinic/apyrimidinic) lyase activity and introduces nicks in the DNA strand. Cleaves the DNA backbone by beta-delta elimination to generate a single-strand break at the site of the removed base with both 3'- and 5'-phosphates. This chain is Endonuclease 8, found in Salmonella dublin (strain CT_02021853).